The following is a 206-amino-acid chain: Imidazoleglycerol-phosphate dehydratase (206 aa).

The protein belongs to the imidazoleglycerol-phosphate dehydratase family.

The protein resides in the cytoplasm. It carries out the reaction D-erythro-1-(imidazol-4-yl)glycerol 3-phosphate = 3-(imidazol-4-yl)-2-oxopropyl phosphate + H2O. It functions in the pathway amino-acid biosynthesis; L-histidine biosynthesis; L-histidine from 5-phospho-alpha-D-ribose 1-diphosphate: step 6/9. This chain is Imidazoleglycerol-phosphate dehydratase, found in Mycolicibacterium smegmatis (strain ATCC 700084 / mc(2)155) (Mycobacterium smegmatis).